A 96-amino-acid polypeptide reads, in one-letter code: ATP synthase subunit c (96 aa).

The next 2 helical transmembrane spans lie at 9–29 (FIAC…GCGI) and 58–78 (IGLA…LILI).

The protein belongs to the ATPase C chain family. As to quaternary structure, F-type ATPases have 2 components, F(1) - the catalytic core - and F(0) - the membrane proton channel. F(1) has five subunits: alpha(3), beta(3), gamma(1), delta(1), epsilon(1). F(0) has three main subunits: a(1), b(2) and c(10-14). The alpha and beta chains form an alternating ring which encloses part of the gamma chain. F(1) is attached to F(0) by a central stalk formed by the gamma and epsilon chains, while a peripheral stalk is formed by the delta and b chains.

The protein resides in the cell inner membrane. Its function is as follows. F(1)F(0) ATP synthase produces ATP from ADP in the presence of a proton or sodium gradient. F-type ATPases consist of two structural domains, F(1) containing the extramembraneous catalytic core and F(0) containing the membrane proton channel, linked together by a central stalk and a peripheral stalk. During catalysis, ATP synthesis in the catalytic domain of F(1) is coupled via a rotary mechanism of the central stalk subunits to proton translocation. Functionally, key component of the F(0) channel; it plays a direct role in translocation across the membrane. A homomeric c-ring of between 10-14 subunits forms the central stalk rotor element with the F(1) delta and epsilon subunits. The protein is ATP synthase subunit c of Desulfosudis oleivorans (strain DSM 6200 / JCM 39069 / Hxd3) (Desulfococcus oleovorans).